The sequence spans 746 residues: tRNA(Met) cytidine acetyltransferase TmcA (746 aa).

A disordered region spans residues A181–E200. Residues Q202, G228–I237, and R370 contribute to the ATP site. Positions V405 to P617 constitute an N-acetyltransferase domain. Acetyl-CoA contacts are provided by residues I517–V519, Q524–T530, E557, and R564.

The protein belongs to the RNA cytidine acetyltransferase family. TmcA subfamily.

Its subcellular location is the cytoplasm. It carries out the reaction cytidine(34) in elongator tRNA(Met) + acetyl-CoA + ATP + H2O = N(4)-acetylcytidine(34) in elongator tRNA(Met) + ADP + phosphate + CoA + H(+). Its function is as follows. Catalyzes the formation of N(4)-acetylcytidine (ac(4)C) at the wobble position of tRNA(Met), by using acetyl-CoA as an acetyl donor and ATP (or GTP). The sequence is that of tRNA(Met) cytidine acetyltransferase TmcA from Nitrosococcus halophilus (strain Nc4).